The chain runs to 60 residues: Metallothionein A (60 aa).

Positions 1-28 (MDPCDCSKSGTCNCGGSCTCTNCSCKSC) are beta. 20 residues coordinate a divalent metal cation: Cys-4, Cys-6, Cys-12, Cys-14, Cys-18, Cys-20, Cys-23, Cys-25, Cys-28, Cys-32, Cys-33, Cys-35, Cys-36, Cys-40, Cys-43, Cys-47, Cys-49, Cys-54, Cys-58, and Cys-59. Positions 29 to 60 (KKSCCPCCPSGCTKCASGCVCKGKTCDTSCCQ) are alpha.

This sequence belongs to the metallothionein superfamily. Type 1 family.

Metallothioneins have a high content of cysteine residues that bind various heavy metals. The polypeptide is Metallothionein A (mta) (Chionodraco hamatus (Antarctic teleost icefish)).